Consider the following 264-residue polypeptide: Apolipoprotein A-I (264 aa).

Positions 1-18 (MKAVVLALAVLFLTGSQA) are cleaved as a signal peptide. 2 consecutive repeat copies span residues 67–88 (LHLLDNWDTLSNTVGRLREQLG) and 89–110 (PVTHEFWANLEKDTEWLRQEMN). The tract at residues 67–264 (LHLLDNWDTL…DEASKKLNAQ (198 aa)) is 10 X approximate tandem repeats. Methionine sulfoxide is present on M109. A 3; half-length repeat occupies 111 to 121 (KDLEEVKVKVQ). A run of 5 repeats spans residues 122 to 143 (PYLDDFQKKWQEEVERYREKVG), 144 to 165 (PLGAELREGARQKLQELHEKLT), 166 to 187 (PLGEDLRDRARVHVDALRTQLA), 188 to 207 (PYSDQMRERLATRLAAIRDS), and 208 to 229 (PSLAVYHAKASEHLKTLSEKAK). A 9; half-length repeat occupies 230 to 240 (PALEDLRQGLM). Residues 241-264 (PVLENLKTTVLAAIDEASKKLNAQ) form repeat 10.

Belongs to the apolipoprotein A1/A4/E family. As to quaternary structure, homodimer. Interacts with APOA1BP and CLU. Component of a sperm activating protein complex (SPAP), consisting of APOA1, an immunoglobulin heavy chain, an immunoglobulin light chain and albumin. Interacts with NDRG1. Interacts with SCGB3A2. Interacts with NAXE and YJEFN3. Post-translationally, glycosylated. In terms of processing, palmitoylated. Phosphorylation sites are present in the extracellular medium.

The protein localises to the secreted. Functionally, participates in the reverse transport of cholesterol from tissues to the liver for excretion by promoting cholesterol efflux from tissues and by acting as a cofactor for the lecithin cholesterol acyltransferase (LCAT). As part of the SPAP complex, activates spermatozoa motility. The polypeptide is Apolipoprotein A-I (APOA1) (Jaculus jaculus (Lesser Egyptian jerboa)).